Here is a 179-residue protein sequence, read N- to C-terminus: Interleukin-10 (179 aa).

The signal sequence occupies residues 1–19 (MPSSSALLCCLVFLAGVAA). 2 disulfide bridges follow: cysteine 31/cysteine 127 and cysteine 81/cysteine 133. An N-linked (GlcNAc...) asparagine glycan is attached at asparagine 135.

It belongs to the IL-10 family. As to quaternary structure, homodimer. Interacts with IL10RA and IL10RB.

It localises to the secreted. In terms of biological role, major immune regulatory cytokine that acts on many cells of the immune system where it has profound anti-inflammatory functions, limiting excessive tissue disruption caused by inflammation. Mechanistically, IL10 binds to its heterotetrameric receptor comprising IL10RA and IL10RB leading to JAK1 and STAT2-mediated phosphorylation of STAT3. In turn, STAT3 translocates to the nucleus where it drives expression of anti-inflammatory mediators. Targets antigen-presenting cells (APCs) such as macrophages and monocytes and inhibits their release of pro-inflammatory cytokines including granulocyte-macrophage colony-stimulating factor /GM-CSF, granulocyte colony-stimulating factor/G-CSF, IL-1 alpha, IL-1 beta, IL-6, IL-8 and TNF-alpha. Also interferes with antigen presentation by reducing the expression of MHC-class II and co-stimulatory molecules, thereby inhibiting their ability to induce T cell activation. In addition, controls the inflammatory response of macrophages by reprogramming essential metabolic pathways including mTOR signaling. The protein is Interleukin-10 (IL10) of Bubalus carabanensis (Swamp type water buffalo).